Consider the following 498-residue polypeptide: Phosphatidylserine synthase (498 aa).

Residues 1–65 (MKKRTNSRGT…GSVSSAGARR (65 aa)) are disordered. At 1–92 (MKKRTNSRGT…VDDISLDFFY (92 aa)) the chain is on the cytoplasmic side. A compositionally biased stretch (polar residues) spans 7 to 25 (SRGTPTSSGDALLDTSFSS). A helical transmembrane segment spans residues 93-113 (KPHTITLLAVSVLAVMYFAFV). Topologically, residues 114 to 122 (RNEANVDEN) are lumenal. The chain crosses the membrane as a helical span at residues 123–143 (LWAGLLCIVFFFLIVSVIAFP). The Cytoplasmic portion of the chain corresponds to 144 to 153 (NGPFTRPHPA). Residues 154–174 (VWRILFGCSVLYLLTLQFLMF) traverse the membrane as a helical segment. The Lumenal segment spans residues 175–239 (QNYPTIRSIF…AFKAILIRHM (65 aa)). An N-linked (GlcNAc...) asparagine glycan is attached at Asn205. The helical transmembrane segment at 240-260 (GILWAISVMWEITEITFAHLL) threads the bilayer. Over 261-266 (PNFIEC) the chain is Cytoplasmic. The chain crosses the membrane as a helical span at residues 267–287 (WWDALILDVIICNGLGIWMGL). Topologically, residues 288–339 (KICQILEMREYKWASIKDISTTTGKIKRAMLQFTPESWSAIRWLDPKSTAMR) are lumenal. The chain crosses the membrane as a helical span at residues 340 to 360 (FAAVIQLVIFWQVTELNTFFL). Residues 361 to 367 (KHIFEMP) lie on the Cytoplasmic side of the membrane. The helical transmembrane segment at 368-388 (PDHFIVIGRLIFIGLFVAPSV) threads the bilayer. At 389–402 (RQYYVYVTDTRCKR) the chain is on the lumenal side. Residues 403–423 (VGTQCWVYGAIMVSEAILCIK) form a helical membrane-spanning segment. Residues 424 to 436 (NGKELFERTQAIN) lie on the Cytoplasmic side of the membrane. Residues 437–457 (IVLWLTVQVIISVAFVYLAVY) form a helical membrane-spanning segment. The Lumenal segment spans residues 458–498 (WQQRQLKKVSSTPAKTKETIPASSSSPSKGKLSPQKEKKLK). Positions 465–498 (KVSSTPAKTKETIPASSSSPSKGKLSPQKEKKLK) are disordered. A compositionally biased stretch (low complexity) spans 478–490 (PASSSSPSKGKLS).

This sequence belongs to the phosphatidyl serine synthase family.

It localises to the endoplasmic reticulum membrane. It carries out the reaction a 1,2-diacyl-sn-glycero-3-phosphoethanolamine + L-serine = a 1,2-diacyl-sn-glycero-3-phospho-L-serine + ethanolamine. The protein operates within phospholipid metabolism; phosphatidylserine biosynthesis. In terms of biological role, catalyzes a base-exchange reaction in which the polar head group of phosphatidylethanolamine (PE) is replaced by L-serine. The sequence is that of Phosphatidylserine synthase from Drosophila melanogaster (Fruit fly).